Consider the following 192-residue polypeptide: Fe/S biogenesis protein NfuA (192 aa).

Residues cysteine 150 and cysteine 153 each coordinate [4Fe-4S] cluster.

It belongs to the NfuA family. Homodimer. Requires [4Fe-4S] cluster as cofactor.

Functionally, involved in iron-sulfur cluster biogenesis. Binds a 4Fe-4S cluster, can transfer this cluster to apoproteins, and thereby intervenes in the maturation of Fe/S proteins. Could also act as a scaffold/chaperone for damaged Fe/S proteins. The chain is Fe/S biogenesis protein NfuA from Buchnera aphidicola subsp. Acyrthosiphon pisum (strain 5A).